A 245-amino-acid chain; its full sequence is Galectin-3 (245 aa).

Positions 1-30 are disordered; it reads MADGFSLNDALAGSGNPNPQGWPGAWGNQP. Residue alanine 2 is modified to N-acetylalanine. Residue serine 6 is modified to Phosphoserine; by CK1. 4 repeat units span residues 35 to 43, 44 to 52, 53 to 61, and 62 to 70. The interval 35–99 is 7 X 9 AA tandem repeats of Y-P-G-X(3)-P-[GS]-A; the sequence is YPGASYPGAY…PSAPGAYPAA (65 aa). The interval 47-68 is disordered; sequence QAPPGAYPGQAPPGAYPGPTAP. The stretch at 71 to 78 is one 5; approximate repeat; it reads YPGPAPGA. The 6; approximate repeat unit spans residues 79-88; that stretch reads YPGQPGASGA. A 7; approximate repeat occupies 89–99; that stretch reads YPSAPGAYPAA. The 131-residue stretch at 113–243 folds into the Galectin domain; it reads YKLPLAGGVM…DITLTSAAPT (131 aa). 176 to 182 contacts a beta-D-galactoside; the sequence is WGREERQ. The residue at position 183 (serine 183) is a Phosphoserine. Residues 221–236 carry the Nuclear export signal motif; it reads KNLREINQMEISGDIT.

Probably forms homo- or heterodimers. Interacts with DMBT1. Interacts with CD6 and ALCAM. Forms a complex with the ITGA3, ITGB1 and CSPG4. Interacts with LGALS3BP, LYPD3, ZFTRAF1 and UACA. Interacts with TRIM16; this interaction mediates autophagy of damage endomembranes. Interacts with cargo receptor TMED10; the interaction mediates the translocation from the cytoplasm into the ERGIC (endoplasmic reticulum-Golgi intermediate compartment) and thereby secretion. Interacts with and inhibits by binding NCR3/NKp30.

Its subcellular location is the cytoplasm. The protein localises to the nucleus. It is found in the secreted. Functionally, galactose-specific lectin which binds IgE. May mediate with the alpha-3, beta-1 integrin the stimulation by CSPG4 of endothelial cells migration. Together with DMBT1, required for terminal differentiation of columnar epithelial cells during early embryogenesis. In the nucleus: acts as a pre-mRNA splicing factor. Involved in acute inflammatory responses including neutrophil activation and adhesion, chemoattraction of monocytes macrophages, opsonization of apoptotic neutrophils, and activation of mast cells. Together with TRIM16, coordinates the recognition of membrane damage with mobilization of the core autophagy regulators ATG16L1 and BECN1 in response to damaged endomembranes. When secreted, interacts with NK cell-activating receptor NCR3/NKp30 acting as an inhibitory ligand which antagonizes NK cell attack. This chain is Galectin-3 (LGALS3), found in Cricetulus longicaudatus (Long-tailed dwarf hamster).